Consider the following 1328-residue polypeptide: ABC transporter C family member 7 (1328 aa).

The region spanning 104-389 (HKTSIIVQIF…LPQAIQRLLS (286 aa)) is the ABC transmembrane type-1 1 domain. 6 helical membrane-spanning segments follow: residues 112–132 (IFSAIVSVLSPLCLRAFILYV), 140–160 (SFLVGLFYAVLVLMGALFLSI), 224–244 (LILLVAPIQIIALLALLCWTI), 245–265 (GYSGLVGFLIMILSLPLSTFL), 287–307 (ISEMINGIYLLKLYNWELFFI), and 333–353 (MVVQISSALVLVSSFTVYTLI). The 222-residue stretch at 457–678 (IELVNNDSIE…FDFESIMKTK (222 aa)) folds into the ABC transporter 1 domain. 490 to 497 (GVVGSGKS) provides a ligand contact to ATP. Residues 684–695 (LNNSNNNNNNNN) show a composition bias toward low complexity. The tract at residues 684–708 (LNNSNNNNNNNNNKEEEEDVENLEK) is disordered. Transmembrane regions (helical) follow at residues 762 to 782 (FIFFFTMIMMYIISQLLFLLF), 802 to 822 (DSFYILYYLLLVGLFSVFLGI), 894 to 914 (VLMMIVINPLIVFPFLLLALF), 988 to 1008 (IGIKIEIISSAAVFLSAFFSL), and 1014 to 1034 (GLSVLAVTTSLSLTGYLNWCI). Residues 765–1046 (FFTMIMMYII…YIEFSMKMSS (282 aa)) form the ABC transmembrane type-1 2 domain. The ABC transporter 2 domain occupies 1083–1316 (IQFKNVEIKY…INNQNSKFKK (234 aa)). Position 1117–1124 (1117–1124 (GKSGSGKS)) interacts with ATP.

The protein belongs to the ABC transporter superfamily. ABCC family. Conjugate transporter (TC 3.A.1.208) subfamily.

It localises to the membrane. The chain is ABC transporter C family member 7 (abcC7) from Dictyostelium discoideum (Social amoeba).